Consider the following 269-residue polypeptide: Leucinostatins biosynthesis cluster protein T (269 aa).

The signal sequence occupies residues methionine 1–alanine 15. An N-linked (GlcNAc...) asparagine glycan is attached at asparagine 254.

In terms of biological role, part of the gene cluster that mediates the biosynthesis of the lipopeptide antibiotics leucinostatins that show extensive biological activities, including antimalarial, antiviral, antibacterial, antifungal, and antitumor activities, as well as phytotoxic. The function of lcsT within the leucinostatins biosynthesis has not been identified yet. The chain is Leucinostatins biosynthesis cluster protein T from Purpureocillium lilacinum (Paecilomyces lilacinus).